Consider the following 359-residue polypeptide: Cytoplasmic tRNA 2-thiolation protein 1 (359 aa).

The protein belongs to the TtcA family. CTU1/NCS6/ATPBD3 subfamily. In terms of assembly, interacts with NCS2 and URM1. May act by forming a heterodimer with NCS2. Component of a large molecular weight complex of more than 250 kDa.

The protein resides in the cytoplasm. It localises to the mitochondrion. It functions in the pathway tRNA modification; 5-methoxycarbonylmethyl-2-thiouridine-tRNA biosynthesis. Its function is as follows. Plays a central role in 2-thiolation of mcm(5)S(2)U at tRNA wobble positions of tRNA(Lys), tRNA(Glu) and tRNA(Gln). Directly binds tRNAs and probably acts by catalyzing adenylation of tRNAs, an intermediate required for 2-thiolation. It is unclear whether it acts as a sulfurtransferase that transfers sulfur from thiocarboxylated URM1 onto the uridine of tRNAs at wobble position. Prior mcm(5) tRNA modification by the elongator complex is required for 2-thiolation. May also be involved in protein urmylation. May also be involved in protein urmylation and in invasive and pseudohyphal growth. In Saccharomyces cerevisiae (strain ATCC 204508 / S288c) (Baker's yeast), this protein is Cytoplasmic tRNA 2-thiolation protein 1.